The chain runs to 240 residues: Aquaporin Z (240 aa).

The next 2 membrane-spanning stretches (helical) occupy residues 10–30 and 35–55; these read MIGTFWLTFAGCGSAVIAAGF and IGLVGVSLAFGLSVVTMAYAI. The NPA 1 motif lies at 64–66; it reads NPA. Helical transmembrane passes span 90-110, 131-151, and 160-180; these read VLGAIAAAALLYLIASGAAGF, LVACFVMEVVMTMMFLFVIMG, and GFAPLAIGLALVMIHLVSIPV. An NPA 2 motif is present at residues 186-188; sequence NPA. Residues 202-222 form a helical membrane-spanning segment; that stretch reads IGQLWLFWVAPLLGGVLGGVI.

Belongs to the MIP/aquaporin (TC 1.A.8) family. Homotetramer.

The protein resides in the cell inner membrane. It catalyses the reaction H2O(in) = H2O(out). Channel that permits osmotically driven movement of water in both directions. It is involved in the osmoregulation and in the maintenance of cell turgor during volume expansion in rapidly growing cells. It mediates rapid entry or exit of water in response to abrupt changes in osmolarity. This is Aquaporin Z from Rhodopseudomonas palustris (strain ATCC BAA-98 / CGA009).